The chain runs to 614 residues: MTTLLRLATAGSVDDGKSTLIGRLLYDSKAVMEDQWASVEQTSKDRGHDYTDLALVTDGLRAEREQGITIDVAYRYFATPKRKFIIADTPGHIQYTRNMVTGASTAQLVIVLVDARHGLLEQSRRHAFLASLLGIRHLVLAVNKMDLLGWDQEKFDAIRDEFHAFAARLDVQDVTSIPISALHGDNVVTKSDQTPWYEGPSLLSHLEDVYIAGDRNMVDVRFPVQYVIRPHTLEHQDHRSYAGTVASGVMRSGDEVVVLPIGKTTRITAIDGPNGPVAEAFPPMAVSVRLADDIDISRGDMIARTHNQPRITQEFDATVCWMADNAVLEPGRDYVVKHTTRTVRARIAGLDYRLDVNTLHRDKTATALKLNELGRVSLRTQVPLLLDEYTRNASTGSFILIDPDTNGTVAAGMVLRDVSARTPSPNTVRHRSLVTAQDRPPRGKTVWFTGLSGSGKSSVAMLVERKLLEKGISAYVLDGDNLRHGLNADLGFSMADRAENLRRLSHVATLLADCGHLVLVPAISPLAEHRALARKVHADAGIDFFEVFCDTPLQDCERRDPKGLYAKARAGEITHFTGIDSPYQRPKNPDLRLTPDRSIDEQAQEVIDLLESSS.

The interval 1-441 (MTTLLRLATA…SLVTAQDRPP (441 aa)) is sulfate adenylyltransferase. Residues 2–217 (TTLLRLATAG…DVYIAGDRNM (216 aa)) enclose the tr-type G domain. The segment at 11 to 18 (GSVDDGKS) is G1. Residue 11 to 18 (GSVDDGKS) coordinates GTP. The G2 stretch occupies residues 67-71 (GITID). The tract at residues 88-91 (DTPG) is G3. Residues 88–92 (DTPGH) and 143–146 (NKMD) contribute to the GTP site. The G4 stretch occupies residues 143–146 (NKMD). The tract at residues 180–182 (SAL) is G5. The segment at 442–614 (RGKTVWFTGL…EVIDLLESSS (173 aa)) is adenylyl-sulfate kinase. Residue 450-457 (GLSGSGKS) participates in ATP binding. Residue S524 is the Phosphoserine intermediate of the active site. Residues 578–597 (GIDSPYQRPKNPDLRLTPDR) form a disordered region. A compositionally biased stretch (basic and acidic residues) spans 587–597 (KNPDLRLTPDR).

The protein in the C-terminal section; belongs to the APS kinase family. In the N-terminal section; belongs to the TRAFAC class translation factor GTPase superfamily. Classic translation factor GTPase family. CysN/NodQ subfamily. In terms of assembly, heterodimer composed of CysD, the smaller subunit, and CysNC.

The enzyme catalyses sulfate + ATP + H(+) = adenosine 5'-phosphosulfate + diphosphate. It catalyses the reaction adenosine 5'-phosphosulfate + ATP = 3'-phosphoadenylyl sulfate + ADP + H(+). The protein operates within sulfur metabolism; hydrogen sulfide biosynthesis; sulfite from sulfate: step 1/3. It functions in the pathway sulfur metabolism; hydrogen sulfide biosynthesis; sulfite from sulfate: step 2/3. Its function is as follows. With CysD forms the ATP sulfurylase (ATPS) that catalyzes the adenylation of sulfate producing adenosine 5'-phosphosulfate (APS) and diphosphate, the first enzymatic step in sulfur assimilation pathway. APS synthesis involves the formation of a high-energy phosphoric-sulfuric acid anhydride bond driven by GTP hydrolysis by CysN coupled to ATP hydrolysis by CysD. Functionally, APS kinase catalyzes the synthesis of activated sulfate. In Mycobacterium tuberculosis (strain CDC 1551 / Oshkosh), this protein is Bifunctional enzyme CysN/CysC (cysNC).